The chain runs to 198 residues: Recombination protein RecR (198 aa).

A C4-type zinc finger spans residues 57–72 (CSICGNLTDEDPCAIC). The Toprim domain occupies 80–175 (STILIVEDSR…KVTRLARGLA (96 aa)).

Belongs to the RecR family.

In terms of biological role, may play a role in DNA repair. It seems to be involved in an RecBC-independent recombinational process of DNA repair. It may act with RecF and RecO. The chain is Recombination protein RecR from Streptococcus gordonii (strain Challis / ATCC 35105 / BCRC 15272 / CH1 / DL1 / V288).